A 543-amino-acid polypeptide reads, in one-letter code: Sensor histidine kinase DcuS (543 aa).

The Cytoplasmic segment spans residues 1–20 (MRHSLPYHILRKRPMKLSTT). A helical membrane pass occupies residues 21–41 (VILMVSAVLFSVLLVVHLIYF). Residues 42–181 (SQISDMTRDG…VTQQINDSRW (140 aa)) lie on the Periplasmic side of the membrane. (R)-malate-binding positions include 107–110 (RYSH), K121, 140–142 (GFL), and R147. Residues 182-202 (SIIWSVLFGMLVGLIGTCILV) traverse the membrane as a helical segment. Residues 203–543 (KVLKKILFGL…IPWDGERSNR (341 aa)) lie on the Cytoplasmic side of the membrane. Residues 212–323 (LEPYEISTLF…IIGAISTFRD (112 aa)) enclose the PAS domain. A Histidine kinase domain is found at 346-538 (ERSHEFMNKL…QFFVQIPWDG (193 aa)). H349 bears the Phosphohistidine; by autocatalysis mark.

In terms of assembly, homodimer. Autophosphorylated. The phosphoryl group is rapidly transferred to DcuR.

It is found in the cell inner membrane. The enzyme catalyses ATP + protein L-histidine = ADP + protein N-phospho-L-histidine.. In terms of biological role, member of the two-component regulatory system DcuR/DcuS. Involved in the C4-dicarboxylate-stimulated regulation of the genes encoding the anaerobic fumarate respiratory system (frdABCD; nuoAN; dcuB; sdhCDAB; etc.). Weakly regulates the aerobic C4-dicarboxylate transporter dctA. Activates DcuR by phosphorylation. The sequence is that of Sensor histidine kinase DcuS (dcuS) from Shigella flexneri.